Here is a 156-residue protein sequence, read N- to C-terminus: Large ribosomal subunit protein uL15 (156 aa).

Residues 1–16 (MVRRFKRAVKYRRGSR) are compositionally biased toward basic residues. Positions 1-35 (MVRRFKRAVKYRRGSRTHGWGRVGQHRKSGGSGGK) are disordered.

This sequence belongs to the universal ribosomal protein uL15 family. As to quaternary structure, part of the 50S ribosomal subunit.

Binds to the 23S rRNA. This chain is Large ribosomal subunit protein uL15, found in Pyrobaculum neutrophilum (strain DSM 2338 / JCM 9278 / NBRC 100436 / V24Sta) (Thermoproteus neutrophilus).